The sequence spans 137 residues: Proline-rich protein 13 (137 aa).

Disordered regions lie at residues 26 to 54 and 94 to 137; these read PPPL…PCRP and VGPG…SDSD. A compositionally biased stretch (basic residues) spans 103–124; that stretch reads KTRKKMKKAHKKSHKHHKHGKH. Low complexity predominate over residues 125-137; that stretch reads SSSSSSSSSSDSD.

It localises to the nucleus. In terms of biological role, negatively regulates TSP1 expression at the level of transcription. This down-regulation was shown to reduce taxane-induced apoptosis. The sequence is that of Proline-rich protein 13 (Prr13) from Mus musculus (Mouse).